We begin with the raw amino-acid sequence, 71 residues long: uncharacterized protein (71 aa).

Residues 20–32 are compositionally biased toward polar residues; sequence SSGRRQLTATQPR. Residues 20-46 form a disordered region; it reads SSGRRQLTATQPRSDPESQRGRTSSNR.

This is an uncharacterized protein from Rhizobium leguminosarum.